The chain runs to 125 residues: Histone H2A (125 aa).

The span at 1–18 (MSGRGKGGKAKGKSKSRS) shows a compositional bias: basic residues. The segment at 1–23 (MSGRGKGGKAKGKSKSRSSRAGL) is disordered. Serine 2 is subject to N-acetylserine. Serine 2 is modified (phosphoserine). An N5-methylglutamine modification is found at glutamine 104.

It belongs to the histone H2A family. The nucleosome is a histone octamer containing two molecules each of H2A, H2B, H3 and H4 assembled in one H3-H4 heterotetramer and two H2A-H2B heterodimers. The octamer wraps approximately 147 bp of DNA.

The protein localises to the nucleus. It localises to the chromosome. In terms of biological role, core component of nucleosome. Nucleosomes wrap and compact DNA into chromatin, limiting DNA accessibility to the cellular machineries which require DNA as a template. Histones thereby play a central role in transcription regulation, DNA repair, DNA replication and chromosomal stability. DNA accessibility is regulated via a complex set of post-translational modifications of histones, also called histone code, and nucleosome remodeling. This Urechis caupo (Innkeeper worm) protein is Histone H2A.